A 248-amino-acid polypeptide reads, in one-letter code: Ubiquinone biosynthesis O-methyltransferase (248 aa).

The S-adenosyl-L-methionine site is built by Arg-41, Gly-72, Asp-93, and Met-136.

It belongs to the methyltransferase superfamily. UbiG/COQ3 family.

The enzyme catalyses a 3-demethylubiquinol + S-adenosyl-L-methionine = a ubiquinol + S-adenosyl-L-homocysteine + H(+). It catalyses the reaction a 3-(all-trans-polyprenyl)benzene-1,2-diol + S-adenosyl-L-methionine = a 2-methoxy-6-(all-trans-polyprenyl)phenol + S-adenosyl-L-homocysteine + H(+). It functions in the pathway cofactor biosynthesis; ubiquinone biosynthesis. Functionally, O-methyltransferase that catalyzes the 2 O-methylation steps in the ubiquinone biosynthetic pathway. The chain is Ubiquinone biosynthesis O-methyltransferase from Rhizobium etli (strain ATCC 51251 / DSM 11541 / JCM 21823 / NBRC 15573 / CFN 42).